A 493-amino-acid chain; its full sequence is Probable phospho-2-dehydro-3-deoxyheptonate aldolase, chloroplastic (493 aa).

A chloroplast-targeting transit peptide spans 1–58 (MAMSNTSALASKLLPSCKPHQPTLTFFSPSTTCQKKPRSSRPISAAVHVTQPPKTPIS).

Belongs to the class-II DAHP synthase family.

The protein resides in the plastid. It localises to the chloroplast. It catalyses the reaction D-erythrose 4-phosphate + phosphoenolpyruvate + H2O = 7-phospho-2-dehydro-3-deoxy-D-arabino-heptonate + phosphate. It participates in metabolic intermediate biosynthesis; chorismate biosynthesis; chorismate from D-erythrose 4-phosphate and phosphoenolpyruvate: step 1/7. This is Probable phospho-2-dehydro-3-deoxyheptonate aldolase, chloroplastic (DHS1) from Catharanthus roseus (Madagascar periwinkle).